The primary structure comprises 305 residues: Mycothiol acetyltransferase (305 aa).

2 consecutive N-acetyltransferase domains span residues 10–153 (DRLD…LVVP) and 156–305 (ISLR…YARA). Glu-38 serves as a coordination point for 1D-myo-inositol 2-(L-cysteinylamino)-2-deoxy-alpha-D-glucopyranoside. Acetyl-CoA is bound at residue 82–84 (LAV). Glu-183, Lys-225, and Glu-238 together coordinate 1D-myo-inositol 2-(L-cysteinylamino)-2-deoxy-alpha-D-glucopyranoside. Acetyl-CoA contacts are provided by residues 242–244 (VAI) and 249–255 (QGRGLGR). Residue Tyr-276 participates in 1D-myo-inositol 2-(L-cysteinylamino)-2-deoxy-alpha-D-glucopyranoside binding. An acetyl-CoA-binding site is contributed by 281–286 (NESALH).

The protein belongs to the acetyltransferase family. MshD subfamily. Monomer.

The enzyme catalyses 1D-myo-inositol 2-(L-cysteinylamino)-2-deoxy-alpha-D-glucopyranoside + acetyl-CoA = mycothiol + CoA + H(+). Its function is as follows. Catalyzes the transfer of acetyl from acetyl-CoA to desacetylmycothiol (Cys-GlcN-Ins) to form mycothiol. The protein is Mycothiol acetyltransferase of Rhodococcus jostii (strain RHA1).